The chain runs to 486 residues: Cobyric acid synthase (486 aa).

The region spanning 248 to 435 (VLNVVVPVLP…LHGLFESPAA (188 aa)) is the GATase cobBQ-type domain. The active-site Nucleophile is cysteine 329. Histidine 427 is an active-site residue.

Belongs to the CobB/CobQ family. CobQ subfamily.

It functions in the pathway cofactor biosynthesis; adenosylcobalamin biosynthesis. Its function is as follows. Catalyzes amidations at positions B, D, E, and G on adenosylcobyrinic A,C-diamide. NH(2) groups are provided by glutamine, and one molecule of ATP is hydrogenolyzed for each amidation. The sequence is that of Cobyric acid synthase from Pseudomonas syringae pv. tomato (strain ATCC BAA-871 / DC3000).